The sequence spans 2191 residues: Genome polyprotein (2191 aa).

Gly2 carries N-myristoyl glycine; by host lipidation. The Cytoplasmic segment spans residues 2-1501 (GAQVSTQKTG…HVSRAFICLQ (1500 aa)). Residues 566 to 582 (FYQNDVQNAVERSIVRV) form an amphipathic alpha-helix region. Catalysis depends on for protease 2A activity residues His878 and Asp896. Zn(2+) contacts are provided by Cys913 and Cys915. Cys967 functions as the For protease 2A activity in the catalytic mechanism. Zn(2+) contacts are provided by Cys973 and His975. Residues 1107–1179 (NNGWLKKFTE…EQSAPSQSDQ (73 aa)) are membrane-binding. An oligomerization region spans residues 1107–1245 (NNGWLKKFTE…SPGVGKSVAT (139 aa)). The RNA-binding stretch occupies residues 1128–1132 (AIKIQ). The SF3 helicase domain maps to 1211–1367 (EKKMSNYIQF…SMYNQNGKIN (157 aa)). Residues Cys1375, Cys1387, and Cys1392 each coordinate Zn(2+). Residues 1375-1392 (CDEECCPVNFKKCCPLVC) form a C4-type; degenerate zinc finger. Residues 1419 to 1426 (EYNHRHSV) are RNA-binding. Residues 1430-1435 (LEALFQ) are oligomerization. The stretch at 1502 to 1517 (ALTTFVSVAGIIYIIY) is an intramembrane region. Over 1518-2191 (KLFAGFQGAY…TLRRKWLDSF (674 aa)) the chain is Cytoplasmic. At Tyr1527 the chain carries O-(5'-phospho-RNA)-tyrosine. The region spanning 1547-1725 (GPAFEFAVAM…FSAALLKHYF (179 aa)) is the Peptidase C3 domain. Active-site for protease 3C activity residues include His1586, Glu1617, and Cys1693. The RdRp catalytic domain maps to 1956–2072 (GHLIAFDYSG…SYPWPIDASL (117 aa)). The Mg(2+) site is built by Asp1962 and Asp2058.

Belongs to the picornaviruses polyprotein family. In terms of assembly, interacts with capsid protein VP1 and capsid protein VP3 to form heterotrimeric protomers. Interacts with capsid protein VP0, and capsid protein VP3 to form heterotrimeric protomers. Five protomers subsequently associate to form pentamers which serve as building blocks for the capsid. Interacts with capsid protein VP2, capsid protein VP3 and capsid protein VP4 following cleavage of capsid protein VP0. Interacts with host CD55 and FCGRT; these interactions promote virus attachment to the host cell and subsequent internalization. As to quaternary structure, interacts with capsid protein VP1 and capsid protein VP3 in the mature capsid. Interacts with host CD55 and FCGRT; these interactions promote virus attachment to the host cell and subsequent internalization. In terms of assembly, interacts with capsid protein VP0 and capsid protein VP1 to form heterotrimeric protomers. Five protomers subsequently associate to form pentamers which serve as building blocks for the capsid. Interacts with capsid protein VP4 in the mature capsid. Interacts with protein 2C; this interaction may be important for virion morphogenesis. Interacts with host FCGRT; this interaction promotes virus attachment to the host cell and subsequent internalization. Interacts with capsid protein VP1 and capsid protein VP3. As to quaternary structure, homodimer. In terms of assembly, homohexamer; forms a hexameric ring structure with 6-fold symmetry characteristic of AAA+ ATPases. Interacts (via N-terminus) with host RTN3 (via reticulon domain); this interaction is important for viral replication. Interacts with capsid protein VP3; this interaction may be important for virion morphogenesis. Interacts with protein 3CD. As to quaternary structure, homodimer. Interacts with host GBF1. Interacts (via GOLD domain) with host ACBD3 (via GOLD domain); this interaction allows the formation of a viral protein 3A/ACBD3 heterotetramer with a 2:2 stoichiometry, which will stimulate the recruitment of host PI4KB in order to synthesize PI4P at the viral RNA replication sites. In terms of assembly, interacts with RNA-directed RNA polymerase. Interacts with protein 3AB and with RNA-directed RNA polymerase. As to quaternary structure, interacts with Viral protein genome-linked and with protein 3CD. It depends on Mg(2+) as a cofactor. Post-translationally, specific enzymatic cleavages in vivo by the viral proteases yield processing intermediates and the mature proteins. In terms of processing, myristoylation is required for the formation of pentamers during virus assembly. Further assembly of 12 pentamers and a molecule of genomic RNA generates the provirion. During virion maturation, immature virions are rendered infectious following cleavage of VP0 into VP4 and VP2. This maturation seems to be an autocatalytic event triggered by the presence of RNA in the capsid and it is followed by a conformational change infectious virion. Post-translationally, myristoylation is required during RNA encapsidation and formation of the mature virus particle. In terms of processing, VPg is uridylylated by the polymerase into VPg-pUpU. This acts as a nucleotide-peptide primer for the genomic RNA replication.

It is found in the virion. The protein localises to the host cytoplasm. It localises to the host cytoplasmic vesicle membrane. The protein resides in the host nucleus. The catalysed reaction is a ribonucleoside 5'-triphosphate + H2O = a ribonucleoside 5'-diphosphate + phosphate + H(+). The enzyme catalyses Selective cleavage of Tyr-|-Gly bond in the picornavirus polyprotein.. It carries out the reaction RNA(n) + a ribonucleoside 5'-triphosphate = RNA(n+1) + diphosphate. It catalyses the reaction Selective cleavage of Gln-|-Gly bond in the poliovirus polyprotein. In other picornavirus reactions Glu may be substituted for Gln, and Ser or Thr for Gly.. Its activity is regulated as follows. Replication or transcription is subject to high level of random mutations by the nucleotide analog ribavirin. Forms an icosahedral capsid of pseudo T=3 symmetry with capsid proteins VP2 and VP3. The capsid is 300 Angstroms in diameter, composed of 60 copies of each capsid protein and enclosing the viral positive strand RNA genome. Capsid protein VP1 mainly forms the vertices of the capsid. Capsid protein VP1 interacts with host cell receptor to provide virion attachment to target host cells. This attachment induces virion internalization. Tyrosine kinases are probably involved in the entry process. After binding to its receptor, the capsid undergoes conformational changes. Capsid protein VP1 N-terminus (that contains an amphipathic alpha-helix) and capsid protein VP4 are externalized. Together, they shape a pore in the host membrane through which viral genome is translocated to host cell cytoplasm. Functionally, forms an icosahedral capsid of pseudo T=3 symmetry with capsid proteins VP2 and VP3. The capsid is 300 Angstroms in diameter, composed of 60 copies of each capsid protein and enclosing the viral positive strand RNA genome. In terms of biological role, lies on the inner surface of the capsid shell. After binding to the host receptor, the capsid undergoes conformational changes. Capsid protein VP4 is released, Capsid protein VP1 N-terminus is externalized, and together, they shape a pore in the host membrane through which the viral genome is translocated into the host cell cytoplasm. Its function is as follows. Component of immature procapsids, which is cleaved into capsid proteins VP4 and VP2 after maturation. Allows the capsid to remain inactive before the maturation step. Cysteine protease that cleaves viral polyprotein and specific host proteins. It is responsible for the autocatalytic cleavage between the P1 and P2 regions, which is the first cleavage occurring in the polyprotein. Also cleaves the host translation initiation factor EIF4G1, in order to shut down the capped cellular mRNA translation. Inhibits the host nucleus-cytoplasm protein and RNA trafficking by cleaving host members of the nuclear pores. Counteracts stress granule formation probably by antagonizing its assembly or promoting its dissassembly. Functionally, plays an essential role in the virus replication cycle by acting as a viroporin. Creates a pore in the host endoplasmic reticulum and as a consequence releases Ca2+ in the cytoplasm of infected cell. In turn, high levels of cytoplasmic calcium may trigger membrane trafficking and transport of viral ER-associated proteins to viroplasms, sites of viral genome replication. In terms of biological role, induces and associates with structural rearrangements of intracellular membranes. Displays RNA-binding, nucleotide binding and NTPase activities. May play a role in virion morphogenesis and viral RNA encapsidation by interacting with the capsid protein VP3. Its function is as follows. Localizes the viral replication complex to the surface of membranous vesicles. Together with protein 3CD binds the Cis-Active RNA Element (CRE) which is involved in RNA synthesis initiation. Acts as a cofactor to stimulate the activity of 3D polymerase, maybe through a nucleid acid chaperone activity. Localizes the viral replication complex to the surface of membranous vesicles. It inhibits host cell endoplasmic reticulum-to-Golgi apparatus transport and causes the disassembly of the Golgi complex, possibly through GBF1 interaction. This would result in depletion of MHC, trail receptors and IFN receptors at the host cell surface. Plays an essential role in viral RNA replication by recruiting ACBD3 and PI4KB at the viral replication sites, thereby allowing the formation of the rearranged membranous structures where viral replication takes place. Functionally, acts as a primer for viral RNA replication and remains covalently bound to viral genomic RNA. VPg is uridylylated prior to priming replication into VPg-pUpU. The oriI viral genomic sequence may act as a template for this. The VPg-pUpU is then used as primer on the genomic RNA poly(A) by the RNA-dependent RNA polymerase to replicate the viral genome. During genome replication, the VPg-RNA linkage is removed by the host TDP2, thereby accelerating replication. During the late stage of the replication cycle, host TDP2 is excluded from sites of viral RNA synthesis and encapsidation, allowing for the generation of progeny virions. In terms of biological role, involved in the viral replication complex and viral polypeptide maturation. It exhibits protease activity with a specificity and catalytic efficiency that is different from protease 3C. Protein 3CD binds to the 5'UTR of the viral genome. Its function is as follows. Replicates the viral genomic RNA on the surface of intracellular membranes. May form linear arrays of subunits that propagate along a strong head-to-tail interaction called interface-I. Covalently attaches UMP to a tyrosine of VPg, which is used to prime RNA synthesis. The positive stranded RNA genome is first replicated at virus induced membranous vesicles, creating a dsRNA genomic replication form. This dsRNA is then used as template to synthesize positive stranded RNA genomes. ss(+)RNA genomes are either translated, replicated or encapsidated. Major viral protease that mediates proteolytic processing of the polyprotein. Cleaves host EIF5B, contributing to host translation shutoff. Also cleaves host PABPC1, contributing to host translation shutoff. Cleaves host NLRP1, triggers host N-glycine-mediated degradation of the autoinhibitory NLRP1 N-terminal fragment. This chain is Genome polyprotein, found in Echovirus 6 (strain Charles).